A 200-amino-acid chain; its full sequence is Methylthioribulose-1-phosphate dehydratase (200 aa).

The Zn(2+) site is built by His90 and His92.

This sequence belongs to the aldolase class II family. MtnB subfamily. Zn(2+) is required as a cofactor.

The enzyme catalyses 5-(methylsulfanyl)-D-ribulose 1-phosphate = 5-methylsulfanyl-2,3-dioxopentyl phosphate + H2O. Its pathway is amino-acid biosynthesis; L-methionine biosynthesis via salvage pathway; L-methionine from S-methyl-5-thio-alpha-D-ribose 1-phosphate: step 2/6. Functionally, catalyzes the dehydration of methylthioribulose-1-phosphate (MTRu-1-P) into 2,3-diketo-5-methylthiopentyl-1-phosphate (DK-MTP-1-P). The chain is Methylthioribulose-1-phosphate dehydratase from Sodalis glossinidius (strain morsitans).